The sequence spans 157 residues: Protein Smg (157 aa).

The protein belongs to the Smg family.

In Yersinia pseudotuberculosis serotype O:1b (strain IP 31758), this protein is Protein Smg.